The chain runs to 415 residues: Beta-2 adrenergic receptor (415 aa).

Residues 1 to 34 (MGQPANRSVFLLAPNGSHAPDQGDSQERSEAWVV) lie on the Extracellular side of the membrane. N-linked (GlcNAc...) asparagine glycans are attached at residues Asn-6 and Asn-15. Residues 35–58 (GMGIVMSLIVLAIVFGNVLVITAI) form a helical membrane-spanning segment. Topologically, residues 59 to 71 (ARFERLQTVTNYF) are cytoplasmic. A helical membrane pass occupies residues 72–95 (ITSLACADLVMGLAVVPFGASHIL). Topologically, residues 96–106 (MKMWTFGNFWC) are extracellular. 2 disulfides stabilise this stretch: Cys-106/Cys-191 and Cys-184/Cys-190. The helical transmembrane segment at 107–129 (EFWTSIDVLCVTASIETLCVIAV) threads the bilayer. The Cytoplasmic portion of the chain corresponds to 130-150 (DRYFAITSPFKYQSLLTKNKA). At Tyr-141 the chain carries Phosphotyrosine. The helical transmembrane segment at 151 to 174 (RVVILMVWIVSGLTSFLPIQMHWY) threads the bilayer. At 175–196 (RATHQEAINCYAKETCCDFFTN) the chain is on the extracellular side. A helical membrane pass occupies residues 197-220 (QAYAIASSIVSFYLPLVVMVFVYS). The Cytoplasmic segment spans residues 221–274 (RVFQVAQRQLQKIDRSEGRFHAQNLSQVEQDGRSGHGHRRSSKFCLKEHKALKT). Phosphoserine is present on Ser-246. Residues Ser-261 and Ser-262 each carry the phosphoserine; by PKA modification. Cys-265 is lipidated: S-palmitoyl cysteine. A helical membrane pass occupies residues 275–298 (LGIIMGTFTLCWLPFFIVNIVHVI). The Extracellular portion of the chain corresponds to 299–305 (QDNLIPK). Residues 306-329 (EVYILLNWVGYVNSAFNPLIYCRS) traverse the membrane as a helical segment. Residues 330-415 (PDFRIAFQEL…RNCSTNDSLL (86 aa)) are Cytoplasmic-facing. A lipid anchor (S-palmitoyl cysteine) is attached at Cys-341. 2 positions are modified to phosphoserine; by PKA: Ser-345 and Ser-346. Ser-355 carries the phosphoserine; by BARK modification. The disordered stretch occupies residues 379-415 (SELLCEDPPGTEDRQGTVPSDSVDSQGRNCSTNDSLL). A 4-hydroxyproline mark is found at Pro-387 and Pro-397. The segment covering 395-415 (TVPSDSVDSQGRNCSTNDSLL) has biased composition (polar residues). The PDZ-binding motif lies at 412-415 (DSLL).

Belongs to the G-protein coupled receptor 1 family. Adrenergic receptor subfamily. ADRB2 sub-subfamily. In terms of assembly, binds NHERF1 and GPRASP1. Interacts with ARRB1 and ARRB2. Interacts with SRC. Interacts with USP20 and USP33. Interacts with VHL; the interaction, which is increased on hydroxylation of ADRB2, ubiquitinates ADRB2 leading to its degradation. Interacts with EGLN3; the interaction hydroxylates ADRB2 facilitating VHL-E3 ligase-mediated ubiquitination. Interacts (via PDZ-binding motif) with SNX27 (via PDZ domain); the interaction is required when endocytosed to prevent degradation in lysosomes and promote recycling to the plasma membrane. Interacts with CNIH4. Interacts with ARRDC3. Interacts with NEDD4. Interacts with MARCHF2. In terms of processing, palmitoylated; may reduce accessibility of Ser-345 and Ser-346 by anchoring Cys-341 to the plasma membrane. Agonist stimulation promotes depalmitoylation and further allows Ser-345 and Ser-346 phosphorylation. Phosphorylated by PKA and BARK upon agonist stimulation, which mediates homologous desensitization of the receptor. PKA-mediated phosphorylation seems to facilitate phosphorylation by BARK. Post-translationally, phosphorylation of Tyr-141 is induced by insulin and leads to supersensitization of the receptor. In terms of processing, polyubiquitinated. Agonist-induced ubiquitination leads to sort internalized receptors to the lysosomes for degradation. Deubiquitination by USP20 and USP33, leads to ADRB2 recycling and resensitization after prolonged agonist stimulation. USP20 and USP33 are constitutively associated and are dissociated immediately after agonist stimulation. Ubiquitination by the VHL-E3 ligase complex is oxygen-dependent. Hydroxylation by EGLN3 occurs only under normoxia and increases the interaction with VHL and the subsequent ubiquitination and degradation of ADRB2. Post-translationally, palmitoylated. Mainly palmitoylated at Cys-341. Palmitoylation may reduce accessibility of phosphorylation sites by anchoring the receptor to the plasma membrane. Agonist stimulation promotes depalmitoylation and further allows Ser-345 and Ser-346 phosphorylation. Also undergoes transient, ligand-induced palmitoylation at Cys-265 probably by ZDHHC9, ZDHHC14 and ZDHHC18 within the Golgi. Palmitoylation at Cys-265 requires phosphorylation by PKA and receptor internalization and stabilizes the receptor. Could be depalmitoylated by LYPLA1 at the plasma membrane.

Its subcellular location is the cell membrane. The protein localises to the early endosome. It localises to the golgi apparatus. Beta-adrenergic receptors mediate the catecholamine-induced activation of adenylate cyclase through the action of G proteins. The beta-2-adrenergic receptor binds epinephrine with an approximately 30-fold greater affinity than it does norepinephrine. The protein is Beta-2 adrenergic receptor (ADRB2) of Canis lupus familiaris (Dog).